The following is a 2820-amino-acid chain: Neurofibromin (2820 aa).

At A2 the chain carries N-acetylalanine. A phosphoserine mark is found at S866 and S878. Residues 1253–1463 (HLLYQLLWNM…DLARRFFLDI (211 aa)) form the Ras-GAP domain. The region spanning 1561 to 1719 (EKEEFKALKT…ATLALEEDLK (159 aa)) is the CRAL-TRIO domain. Positions 1561–1818 (EKEEFKALKT…RTRWELSQPD (258 aa)) are lipid binding. S2169 and S2448 each carry phosphoserine. The tract at residues 2457-2482 (YPIHHGDPSSRTLKETQPWSSPRGSE) is disordered. Residues 2458–2470 (PIHHGDPSSRTLK) are compositionally biased toward basic and acidic residues. T2495 bears the Phosphothreonine mark. Phosphoserine occurs at positions 2496, 2502, 2504, and 2524. The Bipartite nuclear localization signal motif lies at 2536 to 2552 (KRQEMESGITTPPKMRR). T2546 carries the post-translational modification Phosphothreonine. 3 positions are modified to phosphoserine: S2578, S2783, and S2798. Residues 2768–2820 (TSQHSPGIDKENVELSPTTGHCNSGRTRHGSASQVQKQRSAGSFKRNSIKKIV) form a disordered region. The span at 2782–2808 (LSPTTGHCNSGRTRHGSASQVQKQRSA) shows a compositional bias: polar residues.

As to quaternary structure, interacts with HTR6. Interacts with SPRED2. Ubiquitinated by RNF7/RBX2, leading to its degradation.

The protein resides in the nucleus. It is found in the nucleolus. Its subcellular location is the cell membrane. Its function is as follows. Stimulates the GTPase activity of Ras. NF1 shows greater affinity for Ras GAP, but lower specific activity. May be a regulator of Ras activity. The polypeptide is Neurofibromin (Nf1) (Rattus norvegicus (Rat)).